Here is a 277-residue protein sequence, read N- to C-terminus: Phosphate import ATP-binding protein PstB (277 aa).

The region spanning 31-272 is the ABC transporter domain; the sequence is IEVPGLSLFY…PAKKQTEDYI (242 aa). Residue 63-70 participates in ATP binding; the sequence is GPSGCGKS.

It belongs to the ABC transporter superfamily. Phosphate importer (TC 3.A.1.7) family. As to quaternary structure, the complex is composed of two ATP-binding proteins (PstB), two transmembrane proteins (PstC and PstA) and a solute-binding protein (PstS).

The protein resides in the cell inner membrane. The catalysed reaction is phosphate(out) + ATP + H2O = ADP + 2 phosphate(in) + H(+). Part of the ABC transporter complex PstSACB involved in phosphate import. Responsible for energy coupling to the transport system. This chain is Phosphate import ATP-binding protein PstB, found in Pseudomonas putida (Arthrobacter siderocapsulatus).